The chain runs to 179 residues: Nucleoside-triphosphatase THEP1 (179 aa).

ATP-binding positions include 7-14 (GRPGVGKT) and 94-101 (LIIVDEIG).

The protein belongs to the THEP1 NTPase family.

The catalysed reaction is a ribonucleoside 5'-triphosphate + H2O = a ribonucleoside 5'-diphosphate + phosphate + H(+). Functionally, has nucleotide phosphatase activity towards ATP, GTP, CTP, TTP and UTP. May hydrolyze nucleoside diphosphates with lower efficiency. In Thermotoga petrophila (strain ATCC BAA-488 / DSM 13995 / JCM 10881 / RKU-1), this protein is Nucleoside-triphosphatase THEP1.